The chain runs to 675 residues: Probable metal-nicotianamine transporter YSL16 (675 aa).

The span at 1–11 (MDRHALGGGGA) shows a compositional bias: gly residues. Residues 1–20 (MDRHALGGGGALEIEKTPEA) form a disordered region. 14 helical membrane-spanning segments follow: residues 50-70 (GMVA…KLSL), 73-93 (GLIP…LRGW), 118-138 (CAVA…LLGL), 162-182 (GIGW…LTLL), 231-251 (ISFL…CGFL), 283-303 (LVNL…WPLI), 329-349 (FICI…VIVV), 393-413 (MAYT…PVMF), 421-441 (VIIA…GTGL), 453-473 (IALF…AGLV), 507-527 (VGQV…FFLF), 567-587 (LQLC…RDFL), 605-625 (FLVG…VFLW), and 633-653 (AALL…IWTF).

This sequence belongs to the YSL (TC 2.A.67.2) family. As to expression, expressed in roots.

It localises to the membrane. In terms of biological role, may be involved in the transport of nicotianamine-chelated metals. The chain is Probable metal-nicotianamine transporter YSL16 (YSL16) from Oryza sativa subsp. japonica (Rice).